Here is a 491-residue protein sequence, read N- to C-terminus: Bifunctional protein GlmU (491 aa).

Residues 1-238 are pyrophosphorylase; the sequence is MTTQPAVPAA…EWEIRGVNDR (238 aa). UDP-N-acetyl-alpha-D-glucosamine is bound by residues 14 to 17, K28, Q81, 86 to 87, 110 to 112, G149, E163, N178, and N236; these read LAAG, GT, and YGD. D112 is a Mg(2+) binding site. A Mg(2+)-binding site is contributed by N236. Positions 239–259 are linker; that stretch reads AQLADLAAEANRRTLRRWMLA. The interval 260-491 is N-acetyltransferase; it reads GVTIADPATT…TASTDREIQP (232 aa). UDP-N-acetyl-alpha-D-glucosamine contacts are provided by R341 and K359. Residue H371 is the Proton acceptor of the active site. 2 residues coordinate UDP-N-acetyl-alpha-D-glucosamine: Y374 and N385. Residues A388, 394–395, S413, and A431 each bind acetyl-CoA; that span reads NY. Residues 460 to 491 are disordered; that stretch reads AKRPGTPAAEAAQRANDESTGTTASTDREIQP.

In the N-terminal section; belongs to the N-acetylglucosamine-1-phosphate uridyltransferase family. This sequence in the C-terminal section; belongs to the transferase hexapeptide repeat family. In terms of assembly, homotrimer. Mg(2+) serves as cofactor.

The protein localises to the cytoplasm. The catalysed reaction is alpha-D-glucosamine 1-phosphate + acetyl-CoA = N-acetyl-alpha-D-glucosamine 1-phosphate + CoA + H(+). It carries out the reaction N-acetyl-alpha-D-glucosamine 1-phosphate + UTP + H(+) = UDP-N-acetyl-alpha-D-glucosamine + diphosphate. The protein operates within nucleotide-sugar biosynthesis; UDP-N-acetyl-alpha-D-glucosamine biosynthesis; N-acetyl-alpha-D-glucosamine 1-phosphate from alpha-D-glucosamine 6-phosphate (route II): step 2/2. Its pathway is nucleotide-sugar biosynthesis; UDP-N-acetyl-alpha-D-glucosamine biosynthesis; UDP-N-acetyl-alpha-D-glucosamine from N-acetyl-alpha-D-glucosamine 1-phosphate: step 1/1. It functions in the pathway bacterial outer membrane biogenesis; LPS lipid A biosynthesis. Functionally, catalyzes the last two sequential reactions in the de novo biosynthetic pathway for UDP-N-acetylglucosamine (UDP-GlcNAc). The C-terminal domain catalyzes the transfer of acetyl group from acetyl coenzyme A to glucosamine-1-phosphate (GlcN-1-P) to produce N-acetylglucosamine-1-phosphate (GlcNAc-1-P), which is converted into UDP-GlcNAc by the transfer of uridine 5-monophosphate (from uridine 5-triphosphate), a reaction catalyzed by the N-terminal domain. The polypeptide is Bifunctional protein GlmU (Kineococcus radiotolerans (strain ATCC BAA-149 / DSM 14245 / SRS30216)).